The chain runs to 365 residues: MGNITADNSSMSCTIDHTIHQTLAPVVYVTVLVVGFPANCLSLYFGYLQIKARNELGVYLCNLTVADLFYICSLPFWLQYVLQHDNWSHGDLSCQVCGILLYENIYISVGFLCCISVDRYLAVAHPFRFHQFRTLKAAVGVSVVIWAKELLTSIYFLMHEEVIEDENQHRVCFEHYPIQAWQRAINYYRFLVGFLFPICLLLASYQGILRAVRRSHGTQKSRKDQIQRLVLSTVVIFLACFLPYHVLLLVRSVWEASCDFAKGVFNAYHFSLLLTSFNCVADPVLYCFVSETTHRDLARLRGACLAFLTCSRTGRAREAYPLGAPEASGKSGAQGEEPELLTKLHPAFQTPNSPGSGGFPTGRLA.

Topologically, residues 1–12 (MGNITADNSSMS) are extracellular. N-linked (GlcNAc...) asparagine glycosylation is found at N3 and N8. A helical transmembrane segment spans residues 13–49 (CTIDHTIHQTLAPVVYVTVLVVGFPANCLSLYFGYLQ). 2 disulfides stabilise this stretch: C13–C258 and C94–C172. At 50–53 (IKAR) the chain is on the cytoplasmic side. A helical transmembrane segment spans residues 54 to 84 (NELGVYLCNLTVADLFYICSLPFWLQYVLQH). At 85-89 (DNWSH) the chain is on the extracellular side. The chain crosses the membrane as a helical span at residues 90-125 (GDLSCQVCGILLYENIYISVGFLCCISVDRYLAVAH). At 126–133 (PFRFHQFR) the chain is on the cytoplasmic side. A helical transmembrane segment spans residues 134 to 160 (TLKAAVGVSVVIWAKELLTSIYFLMHE). Topologically, residues 161–176 (EVIEDENQHRVCFEHY) are extracellular. The segment at 161-176 (EVIEDENQHRVCFEHY) is extracellular loop 2 (ECL2). Residues 177 to 214 (PIQAWQRAINYYRFLVGFLFPICLLLASYQGILRAVRR) traverse the membrane as a helical segment. At 215 to 218 (SHGT) the chain is on the cytoplasmic side. A helical transmembrane segment spans residues 219-254 (QKSRKDQIQRLVLSTVVIFLACFLPYHVLLLVRSVW). At 255 to 260 (EASCDF) the chain is on the extracellular side. Residues 261 to 289 (AKGVFNAYHFSLLLTSFNCVADPVLYCFV) traverse the membrane as a helical segment. Residues 290 to 365 (SETTHRDLAR…SGGFPTGRLA (76 aa)) lie on the Cytoplasmic side of the membrane. The disordered stretch occupies residues 345–365 (HPAFQTPNSPGSGGFPTGRLA). Positions 355–365 (GSGGFPTGRLA) are enriched in gly residues.

Belongs to the G-protein coupled receptor 1 family. Found at low level in a wide range of tissues, but significantly expressed in lung, kidney, bone and nervous system.

The protein resides in the cell membrane. Its activity is regulated as follows. Activated by a network of residues that connects an extracellular-facing cavity to Glu-149, a conserved charged residue buried in the transmembrane core of the receptor. Protonation likely drives conformational changes in extracellular loop 2 (ECL2), which stabilizes movement of transmembrane 3 (TM3) and a series of rearrangements that connect the extracellular-facing cavity to Glu-149, a residue only conserved in proton-sensing G-protein coupled receptors. Activated in an allosteric manner by divalent metal ions at the extracellular surface following the order: Cd(2+) &gt; Co(2+) &gt; Ni(2+) &gt; Zn(2+) &gt; Fe(2+) &gt; Ca(2+) &gt; Mg(2+). Activated by the benzodiazepine drug lorazepam, a non-selective GPR68 positive allosteric modulator. Activated by ogerin (ZINC67740571), a selective GPR68 positive allosteric modulator. Activated by small molecule MS48107, a selective positive allosteric modulator. Inhibited by small molecule ogremorphin, inducing ferroptosis in cancer cells. Proton-sensing G-protein coupled receptor activated by extracellular pH, which is required to monitor pH changes and generate adaptive reactions. The receptor is almost silent at pH 7.8 but fully activated at pH 6.8. Ligand binding causes a conformation change that triggers signaling via guanine nucleotide-binding proteins (G proteins) and modulates the activity of downstream effectors, such as phospholipase C. GPR68 is mainly coupled to G(q) G proteins and mediates production of diacylglycerol (DAG) and inositol 1,4,5-trisphosphate (IP3). Acts as a key mechanosensor of fluid shear stress and membrane stretch. Expressed in endothelial cells of small-diameter resistance arteries, where it mediates flow-induced dilation in response to shear stress. May represents an osteoblastic pH sensor regulating cell-mediated responses to acidosis in bone. Acts as a regulator of calcium-sensing receptor CASR in a seesaw manner: GPR68-mediated signaling inhibits CASR signaling in response to protons, while CASR inhibits GPR68 in presence of extracellular calcium. This Homo sapiens (Human) protein is G-protein coupled receptor 68.